A 424-amino-acid polypeptide reads, in one-letter code: UPF0053 protein MG146 (424 aa).

Positions serine 6–aspartate 191 constitute a CNNM transmembrane domain. 4 consecutive transmembrane segments (helical) span residues glycine 7–valine 27, leucine 71–leucine 91, leucine 101–isoleucine 121, and leucine 135–leucine 155. CBS domains follow at residues methionine 210–leucine 270 and leucine 272–glutamate 332.

This sequence belongs to the UPF0053 family.

It localises to the cell membrane. This Mycoplasma genitalium (strain ATCC 33530 / DSM 19775 / NCTC 10195 / G37) (Mycoplasmoides genitalium) protein is UPF0053 protein MG146.